The primary structure comprises 175 residues: Large ribosomal subunit protein uL10 (175 aa).

Belongs to the universal ribosomal protein uL10 family. In terms of assembly, part of the ribosomal stalk of the 50S ribosomal subunit. The N-terminus interacts with L11 and the large rRNA to form the base of the stalk. The C-terminus forms an elongated spine to which L12 dimers bind in a sequential fashion forming a multimeric L10(L12)X complex.

Functionally, forms part of the ribosomal stalk, playing a central role in the interaction of the ribosome with GTP-bound translation factors. This Xylella fastidiosa (strain M12) protein is Large ribosomal subunit protein uL10.